An 883-amino-acid polypeptide reads, in one-letter code: MAERNSASWNRKVASFCSEPKTFLCDSSVDGFLGELLKDLQSEAIHGQTKILMMDLLLEFPEFLCPDQKTVEMTAETLMNILKKMPSSERSMTLRCHLLLAIETVLITCESFNQNSKMAQDFASLLMHIISDVNDKKQGVANRPLRTTACECLRELESCYPGFLSQRMEKLYLMQQQEVTAAHQSYTLLYTVVLKNAIRFLAQKEGPSNGALKNALLSNEDFFWSATENMVELQPSSNEQLLLLPSNSETKDLKSILALLLEDSYLLTPVCQNTLFWQIVQVVAMARTISPVIFKSQLVRLFSTMDLSCFHSILQMKAVFTDSLFTGEDEHFLIQRLVGMTQHPLLSTPVKLFYLDCLLHFPENRPLTSNSEENLPVLLTVQMTSSLFPNVFNDHSTMLCRQNVLSMVYLENEGSYSEKGIAFLFEHVMSLYSMVHKNGNREITATFFRAVHLFVQYFNFCEKHMENLTEKLLKLYMSNSSLAPNFINLINQTQILLEFHVWPVTLSKALQKEIVNLPTDKWTMKNLGWHLKILSRVAQENSISQSSTALFLRRVVFCSDLCSKGDWRTGNALLSVCKHVLQHQKLSAIFVHLADLLQYLMHRFEDIDVQDRARLYYVLLTNVSSDKLGKILTMSPARGQTKSRSLSSIMTENENFSTMLTIRNAEKTLLCLQPVLEGIKAFTCISDSPSLYCIVLQFENTDCRFESISDINVPCLFVDRKPPVVTINLVPKEPYPTIFSVSATYSTQDGITYQTKLDPLYITFREMFIPLPLPALWPLESRFDLFGKLWSAFKPDEQNQFEESIFCYEMSNNSLHDIVLDNFSKFAVSCNGGEYKIAVFLPPQFHILMHIKSQDDTACFSVRTDNWNLLPYLNSHLLDITLQ.

In terms of assembly, probably part of the adaptor protein complex 5 (AP-5).

Functionally, as part of AP-5, a probable fifth adaptor protein complex, it may be involved in endosomal transport. In Xenopus tropicalis (Western clawed frog), this protein is AP-5 complex subunit beta-1 (ap5b1).